The chain runs to 73 residues: Translation initiation factor IF-1 (73 aa).

Residues 1–72 (MAKDEIIEFE…SKGRITYRGK (72 aa)) enclose the S1-like domain.

This sequence belongs to the IF-1 family. As to quaternary structure, component of the 30S ribosomal translation pre-initiation complex which assembles on the 30S ribosome in the order IF-2 and IF-3, IF-1 and N-formylmethionyl-tRNA(fMet); mRNA recruitment can occur at any time during PIC assembly.

Its subcellular location is the cytoplasm. Its function is as follows. One of the essential components for the initiation of protein synthesis. Stabilizes the binding of IF-2 and IF-3 on the 30S subunit to which N-formylmethionyl-tRNA(fMet) subsequently binds. Helps modulate mRNA selection, yielding the 30S pre-initiation complex (PIC). Upon addition of the 50S ribosomal subunit IF-1, IF-2 and IF-3 are released leaving the mature 70S translation initiation complex. The polypeptide is Translation initiation factor IF-1 (Psychrobacter arcticus (strain DSM 17307 / VKM B-2377 / 273-4)).